The chain runs to 325 residues: NADH-ubiquinone oxidoreductase chain 1 (325 aa).

The next 8 helical transmembrane spans lie at 5–25 (VPAEILCLILPLLLGVAFLVL), 40–60 (PDVVGSFGLLQPLADGLKLIL), 79–99 (VATFMLSLVAWAVVPFDYGMV), 105–125 (IGLLYLFAISSLGVYGIIIAG), 151–171 (IGLILITVLICVGSCNLSEIV), 177–197 (IWFGIPLFPVLVMFFISCLAE), 237–257 (ILMSGLCTLLFLGGWLPILDL), and 263–283 (IPCSIWFSIKVLLFLFLYIWV).

It belongs to the complex I subunit 1 family.

The protein localises to the mitochondrion inner membrane. The catalysed reaction is a ubiquinone + NADH + 5 H(+)(in) = a ubiquinol + NAD(+) + 4 H(+)(out). Functionally, core subunit of the mitochondrial membrane respiratory chain NADH dehydrogenase (Complex I) that is believed to belong to the minimal assembly required for catalysis. Complex I functions in the transfer of electrons from NADH to the respiratory chain. The immediate electron acceptor for the enzyme is believed to be ubiquinone. The chain is NADH-ubiquinone oxidoreductase chain 1 (ND1) from Triticum aestivum (Wheat).